Consider the following 734-residue polypeptide: Photosystem I P700 chlorophyll a apoprotein A2 (734 aa).

8 consecutive transmembrane segments (helical) span residues 46-69, 135-158, 175-199, 273-291, 330-353, 369-395, 417-439, and 517-535; these read IFASHFGQLAIIFLWTSGNLFHVA, LYTGALFLLFLSAISLLAGWFHLQ, LNHHLSGLFGVSSLAWTGHLVHVAI, IAHHHLAIAFIFLVAGHMY, LHFQLGLALASLGVITSLVAQHMY, AALYTHHQYIAGFIMTGAFAHGAIFFI, AIISHLSWASLFLGFHTLGLYVH, and FLVHHAIALGLHTTTLILV. Residues cysteine 559 and cysteine 568 each contribute to the [4Fe-4S] cluster site. A run of 2 helical transmembrane segments spans residues 575 to 596 and 643 to 665; these read AFYLAVFWMLNTIGWVTFYWHW and LSVWAWMFLFGHLVWATGFMFLI. Residues histidine 654, methionine 662, and tyrosine 670 each contribute to the chlorophyll a site. Tryptophan 671 is a binding site for phylloquinone. A helical transmembrane segment spans residues 707–727; it reads LVGLAHFSVGYIFTYAAFLIA.

The protein belongs to the PsaA/PsaB family. The PsaA/B heterodimer binds the P700 chlorophyll special pair and subsequent electron acceptors. PSI consists of a core antenna complex that captures photons, and an electron transfer chain that converts photonic excitation into a charge separation. The eukaryotic PSI reaction center is composed of at least 11 subunits. Requires P700 is a chlorophyll a/chlorophyll a' dimer, A0 is one or more chlorophyll a, A1 is one or both phylloquinones and FX is a shared 4Fe-4S iron-sulfur center. as cofactor.

It is found in the plastid. Its subcellular location is the chloroplast thylakoid membrane. The catalysed reaction is reduced [plastocyanin] + hnu + oxidized [2Fe-2S]-[ferredoxin] = oxidized [plastocyanin] + reduced [2Fe-2S]-[ferredoxin]. In terms of biological role, psaA and PsaB bind P700, the primary electron donor of photosystem I (PSI), as well as the electron acceptors A0, A1 and FX. PSI is a plastocyanin-ferredoxin oxidoreductase, converting photonic excitation into a charge separation, which transfers an electron from the donor P700 chlorophyll pair to the spectroscopically characterized acceptors A0, A1, FX, FA and FB in turn. Oxidized P700 is reduced on the lumenal side of the thylakoid membrane by plastocyanin. The sequence is that of Photosystem I P700 chlorophyll a apoprotein A2 from Jasminum nudiflorum (Winter jasmine).